The sequence spans 308 residues: Ribosomal RNA small subunit methyltransferase H (308 aa).

S-adenosyl-L-methionine is bound by residues 46–48 (AGH), Asp63, Tyr87, Asp108, and Gln115. The disordered stretch occupies residues 269–308 (TKRPVEASEEERGRNPRARSAKLRAAEKVAAPEGLPEVEV). The segment covering 271–282 (RPVEASEEERGR) has biased composition (basic and acidic residues).

This sequence belongs to the methyltransferase superfamily. RsmH family.

The protein resides in the cytoplasm. The catalysed reaction is cytidine(1402) in 16S rRNA + S-adenosyl-L-methionine = N(4)-methylcytidine(1402) in 16S rRNA + S-adenosyl-L-homocysteine + H(+). In terms of biological role, specifically methylates the N4 position of cytidine in position 1402 (C1402) of 16S rRNA. This chain is Ribosomal RNA small subunit methyltransferase H, found in Deinococcus geothermalis (strain DSM 11300 / CIP 105573 / AG-3a).